The following is a 498-amino-acid chain: Acetylcholine receptor subunit alpha-type acr-16 (498 aa).

Residues 1–19 (MSVCTLLISCAILAAPTLG) form the signal peptide. At 20–230 (SLQERRLYED…FYLHMRRRTL (211 aa)) the chain is on the extracellular side. 2 N-linked (GlcNAc...) asparagine glycosylation sites follow: asparagine 43 and asparagine 93. Cystine bridges form between cysteine 147–cysteine 161 and cysteine 211–cysteine 212. 3 helical membrane passes run 231-252 (YYGF…LGFT), 261-279 (ITLQ…SIVS), and 295-314 (FFTC…VYVL). Over 315–472 (NLHYRTPETH…WKFAAMVVDR (158 aa)) the chain is Cytoplasmic. Residues 473–493 (LCLYVFTIFIIVSTIGIFWSA) traverse the membrane as a helical segment.

It belongs to the ligand-gated ion channel (TC 1.A.9) family. Acetylcholine receptor (TC 1.A.9.1) subfamily. As to expression, expressed in the body wall muscle.

It is found in the postsynaptic cell membrane. The protein localises to the cell membrane. In terms of biological role, after binding acetylcholine, the AChR responds by an extensive change in conformation that affects all subunits and leads to opening of an ion-conducting channel across the plasma membrane. A subunit of the levamisole-insensitive nicotinic receptor. The polypeptide is Acetylcholine receptor subunit alpha-type acr-16 (acr-16) (Caenorhabditis elegans).